The following is a 122-amino-acid chain: uncharacterized protein (122 aa).

The first 33 residues, 1-33 (MASTVAGLSMSAESLRLPLLIGVSSGMLSVSDA), serve as a signal peptide directing secretion.

This is an uncharacterized protein from Saccharomyces cerevisiae (strain ATCC 204508 / S288c) (Baker's yeast).